The following is a 253-amino-acid chain: Triosephosphate isomerase (253 aa).

N12 and K14 together coordinate substrate. H96 functions as the Electrophile in the catalytic mechanism. E169 serves as the catalytic Proton acceptor.

The protein belongs to the triosephosphate isomerase family. In terms of assembly, homodimer.

The protein resides in the cytoplasm. It catalyses the reaction D-glyceraldehyde 3-phosphate = dihydroxyacetone phosphate. It participates in carbohydrate biosynthesis; gluconeogenesis. The protein operates within carbohydrate degradation; glycolysis; D-glyceraldehyde 3-phosphate from glycerone phosphate: step 1/1. Functionally, antigen to the host M.1 monoclonal antibody. This is Triosephosphate isomerase (TPI) from Schistosoma mansoni (Blood fluke).